The following is a 576-amino-acid chain: Proline--tRNA ligase (576 aa).

This sequence belongs to the class-II aminoacyl-tRNA synthetase family. ProS type 1 subfamily. Homodimer.

It is found in the cytoplasm. It carries out the reaction tRNA(Pro) + L-proline + ATP = L-prolyl-tRNA(Pro) + AMP + diphosphate. Its function is as follows. Catalyzes the attachment of proline to tRNA(Pro) in a two-step reaction: proline is first activated by ATP to form Pro-AMP and then transferred to the acceptor end of tRNA(Pro). As ProRS can inadvertently accommodate and process non-cognate amino acids such as alanine and cysteine, to avoid such errors it has two additional distinct editing activities against alanine. One activity is designated as 'pretransfer' editing and involves the tRNA(Pro)-independent hydrolysis of activated Ala-AMP. The other activity is designated 'posttransfer' editing and involves deacylation of mischarged Ala-tRNA(Pro). The misacylated Cys-tRNA(Pro) is not edited by ProRS. This chain is Proline--tRNA ligase, found in Leptospira interrogans serogroup Icterohaemorrhagiae serovar copenhageni (strain Fiocruz L1-130).